A 537-amino-acid chain; its full sequence is Intercellular adhesion molecule 1 (537 aa).

A signal peptide spans 1–27 (MASTRAKPTLPLLLALVTVVIPGPGDA). Residues 28–485 (QVSIHPREAF…LTVLYHSQNN (458 aa)) lie on the Extracellular side of the membrane. Ig-like C2-type domains follow at residues 41–102 (GGSV…QSSA) and 127–195 (GKDL…LDLR). Residue Asn47 is glycosylated (N-linked (GlcNAc...) asparagine). 3 disulfide bridges follow: Cys48-Cys91, Cys52-Cys95, and Cys134-Cys188. Positions 151 to 153 (RGE) match the Cell attachment site; atypical motif. Positions 179–181 (RGD) match the Cell attachment site motif. 9 N-linked (GlcNAc...) asparagine glycosylation sites follow: Asn185, Asn204, Asn267, Asn311, Asn362, Asn388, Asn409, Asn456, and Asn469. The 68-residue stretch at 232 to 299 (GTQQKLFCSL…LRCVLELADQ (68 aa)) folds into the Ig-like C2-type 3 domain. Cys239 and Cys292 are oxidised to a cystine. Positions 327–381 (GSQVTVKCEAHSGSKVVLLSGVEPRPPTPQVQFTLNASSEDHKRSFFCSAALEVA) constitute an Ig-like C2-type 4 domain. An intrachain disulfide couples Cys334 to Cys374. Disulfide bonds link Cys406–Cys422, Cys422–Cys461, and Cys434–Cys461. The 54-residue stretch at 415–468 (GSQQTLKCQAWGNPSPKMTCRRKADGALLPIGVVKSVKQEMNGTYVCHAFSSHG) folds into the Ig-like C2-type 5 domain. A helical membrane pass occupies residues 486 to 509 (WTIIILVPVLLVIVGLVMAASYVY). The Cytoplasmic portion of the chain corresponds to 510-537 (NRQRKIRIYKLQKAQEEAIKLKGQAPPP).

This sequence belongs to the immunoglobulin superfamily. ICAM family. As to quaternary structure, homodimer. Interacts with MUC1 and promotes cell aggregation in epithelial cells. Interacts with ARHGEF26/SGEF. Interacts (on T cell side) with CD81, CD247 and CD9 at immunological synapses between antigen-presenting cells and T cells. Post-translationally, monoubiquitinated, which is promoted by MARCH9 and leads to endocytosis. As to expression, expressed at low level on a subpopulation of lymphocytes, macrophages, and endothelial cells, but is strongly induced on these cells, and on fibroblasts and epithelial cells.

Its subcellular location is the membrane. ICAM proteins are ligands for the leukocyte adhesion protein LFA-1 (integrin alpha-L/beta-2). During leukocyte trans-endothelial migration, ICAM1 engagement promotes the assembly of endothelial apical cups through ARHGEF26/SGEF and RHOG activation. In Mus musculus (Mouse), this protein is Intercellular adhesion molecule 1 (Icam1).